The following is a 528-amino-acid chain: Protein BFR2 (528 aa).

2 disordered regions span residues 14-158 and 372-401; these read NKSK…ADAK and DSNS…NNAI. Residues 132-146 show a composition bias toward acidic residues; sequence DSGDSDSDSGSDAGE.

The protein belongs to the AATF family.

The protein resides in the nucleus. It is found in the nucleolus. The sequence is that of Protein BFR2 (BFR2) from Eremothecium gossypii (strain ATCC 10895 / CBS 109.51 / FGSC 9923 / NRRL Y-1056) (Yeast).